Consider the following 288-residue polypeptide: Probable chromosome 1-partitioning protein ParB (288 aa).

The protein belongs to the ParB family.

Its function is as follows. Involved in chromosome partition. Localize to both poles of the predivisional cell following completion of DNA replication. Binds to the DNA origin of replication. The polypeptide is Probable chromosome 1-partitioning protein ParB (parB1) (Deinococcus radiodurans (strain ATCC 13939 / DSM 20539 / JCM 16871 / CCUG 27074 / LMG 4051 / NBRC 15346 / NCIMB 9279 / VKM B-1422 / R1)).